The following is a 302-amino-acid chain: Galactofuranosyltransferase GlfT1 (302 aa).

This sequence belongs to the glycosyltransferase 2 family.

The protein resides in the cell membrane. It localises to the secreted. Its subcellular location is the cell wall. It catalyses the reaction alpha-L-rhamnosyl-(1-&gt;3)-N-acetyl-alpha-D-glucosaminyl-diphospho-trans,octa-cis-decaprenol + 2 UDP-alpha-D-galactofuranose = beta-D-galactofuranosyl-(1-&gt;5)-beta-D-galactofuranosyl-(1-&gt;4)-alpha-L-rhamnosyl-(1-&gt;3)-N-acetyl-alpha-D-glucosaminyl-diphospho-trans,octa-cis-decaprenol + 2 UDP + 2 H(+). The protein operates within cell wall biogenesis; cell wall polysaccharide biosynthesis. In terms of biological role, involved in the biosynthesis of the arabinogalactan (AG) region of the mycolylarabinogalactan-peptidoglycan (mAGP) complex, an essential component of the mycobacterial cell wall. Catalyzes the transfer of the first two galactofuranosyl (Galf) units from UDP-galactofuranose (UDP-Galf) onto the rhamnosyl-GlcNAc-diphospho-decaprenol (Rha-GlcNAc-PP-C50) acceptor, yielding galactofuranosyl-galactofuranosyl-rhamnosyl-GlcNAc-diphospho-decaprenol (Galf-Galf-Rha-GlcNAc-PP-C50). Thus, GlfT1 is the initiator of galactan synthesis, while GlfT2 continues with the subsequent polymerization events. The polypeptide is Galactofuranosyltransferase GlfT1 (Mycolicibacterium smegmatis (strain ATCC 700084 / mc(2)155) (Mycobacterium smegmatis)).